Reading from the N-terminus, the 562-residue chain is MFS-type transporter calB (562 aa).

The span at 1 to 16 (MDEVTRTAQRSPSITE) shows a compositional bias: polar residues. A disordered region spans residues 1 to 45 (MDEVTRTAQRSPSITETHAGETKLAGPGEKEGDVESPVDPSADSE). Residues 57–77 (FAILASVTLSAFLMLLDGSII) form a helical membrane-spanning segment. N-linked (GlcNAc...) asparagine glycosylation occurs at asparagine 83. A run of 13 helical transmembrane segments spans residues 94–113 (IGWY…PLSG), 123–143 (WTYL…GVAN), 154–174 (VAGL…AGAV), 184–204 (GIYL…GGAL), 213–233 (CFYI…FLQV), 256–276 (LIGF…LYYG), 284–304 (SSQV…FALW), 329–349 (INGA…PIYF), 362–382 (VNTL…GVLV), 389–409 (LPFA…VTLF), 418–438 (WIGY…MGII), 451–471 (VGIA…VVVG), and 530–550 (VFYL…GMGW). The N-linked (GlcNAc...) asparagine glycan is linked to asparagine 557.

The protein belongs to the major facilitator superfamily. TCR/Tet family.

The protein resides in the cell membrane. Functionally, MFS-type transporter; part of the gene cluster that mediates the biosynthesis of calbistrin A and related compounds. Calbistrin A is a secondary metabolite with an interesting structure that was recently found to have bioactivity against leukemia cells. It consists of two polyketides linked by an ester bond: a bicyclic decalin containing polyketide and a linear 12 carbon dioic acid structure. Required for the secretion of calbistrin A and calbistrin C, as well as of related compounds decumbenone A, B and C. The protein is MFS-type transporter calB of Penicillium decumbens.